The following is a 336-amino-acid chain: Dihydroorotate dehydrogenase (quinone) (336 aa).

FMN-binding positions include 62-66 (AGLDK) and Thr86. Residue Lys66 coordinates substrate. 111–115 (NRMGF) is a binding site for substrate. FMN is bound by residues Asn139 and Asn172. Asn172 is a substrate binding site. Catalysis depends on Ser175, which acts as the Nucleophile. Asn177 serves as a coordination point for substrate. Residues Lys217 and Thr245 each coordinate FMN. 246 to 247 (NT) serves as a coordination point for substrate. Residues Gly268, Gly297, and 318–319 (YS) each bind FMN.

Belongs to the dihydroorotate dehydrogenase family. Type 2 subfamily. As to quaternary structure, monomer. FMN is required as a cofactor.

The protein localises to the cell membrane. The catalysed reaction is (S)-dihydroorotate + a quinone = orotate + a quinol. It functions in the pathway pyrimidine metabolism; UMP biosynthesis via de novo pathway; orotate from (S)-dihydroorotate (quinone route): step 1/1. Its function is as follows. Catalyzes the conversion of dihydroorotate to orotate with quinone as electron acceptor. This Baumannia cicadellinicola subsp. Homalodisca coagulata protein is Dihydroorotate dehydrogenase (quinone).